Here is a 250-residue protein sequence, read N- to C-terminus: 5'/3'-nucleotidase SurE (250 aa).

D9, D10, S40, and N93 together coordinate a divalent metal cation.

The protein belongs to the SurE nucleotidase family. A divalent metal cation is required as a cofactor.

The protein localises to the cytoplasm. It carries out the reaction a ribonucleoside 5'-phosphate + H2O = a ribonucleoside + phosphate. The catalysed reaction is a ribonucleoside 3'-phosphate + H2O = a ribonucleoside + phosphate. It catalyses the reaction [phosphate](n) + H2O = [phosphate](n-1) + phosphate + H(+). In terms of biological role, nucleotidase with a broad substrate specificity as it can dephosphorylate various ribo- and deoxyribonucleoside 5'-monophosphates and ribonucleoside 3'-monophosphates with highest affinity to 3'-AMP. Also hydrolyzes polyphosphate (exopolyphosphatase activity) with the preference for short-chain-length substrates (P20-25). Might be involved in the regulation of dNTP and NTP pools, and in the turnover of 3'-mononucleotides produced by numerous intracellular RNases (T1, T2, and F) during the degradation of various RNAs. The protein is 5'/3'-nucleotidase SurE of Yersinia enterocolitica serotype O:8 / biotype 1B (strain NCTC 13174 / 8081).